The chain runs to 283 residues: D-alanine aminotransferase (283 aa).

Tyrosine 32 contributes to the substrate binding site. Arginine 51 is a binding site for pyridoxal 5'-phosphate. Residues arginine 99 and histidine 101 each contribute to the substrate site. Catalysis depends on lysine 146, which acts as the Proton acceptor. At lysine 146 the chain carries N6-(pyridoxal phosphate)lysine. Glutamate 178 serves as a coordination point for pyridoxal 5'-phosphate.

The protein belongs to the class-IV pyridoxal-phosphate-dependent aminotransferase family. Homodimer. It depends on pyridoxal 5'-phosphate as a cofactor.

It catalyses the reaction D-alanine + 2-oxoglutarate = D-glutamate + pyruvate. Acts on the D-isomers of alanine, leucine, aspartate, glutamate, aminobutyrate, norvaline and asparagine. The enzyme transfers an amino group from a substrate D-amino acid to the pyridoxal phosphate cofactor to form pyridoxamine and an alpha-keto acid in the first half-reaction. The second-half reaction is the reverse of the first, transferring the amino group from the pyridoxamine to a second alpha-keto acid to form the product D-amino acid via a ping-pong mechanism. This is an important process in the formation of D-alanine and D-glutamate, which are essential bacterial cell wall components. This is D-alanine aminotransferase (dat) from Bacillus sp. (strain YM-1).